We begin with the raw amino-acid sequence, 357 residues long: Hypersensitivity response secretion protein HrcU (357 aa).

The segment at 1–21 (MSDEKTEQPTDKKLEDAHRDG) is disordered. The next 5 helical transmembrane spans lie at 29-49 (LTAA…ASVF), 84-104 (LVLM…IATW), 149-169 (VAVA…IVGA), 180-200 (IGMT…LILG), and 323-343 (LYGP…AWVG).

It belongs to the type III secretion exporter family.

The protein localises to the cell membrane. Its function is as follows. Involved in the secretion of PopA, a proteinaceous elicitor of the hypersensitivity response in plants. The chain is Hypersensitivity response secretion protein HrcU (hrcU) from Ralstonia nicotianae (strain ATCC BAA-1114 / GMI1000) (Ralstonia solanacearum).